The following is a 97-amino-acid chain: Co-chaperonin GroES (97 aa).

This sequence belongs to the GroES chaperonin family. Heptamer of 7 subunits arranged in a ring. Interacts with the chaperonin GroEL.

Its subcellular location is the cytoplasm. Together with the chaperonin GroEL, plays an essential role in assisting protein folding. The GroEL-GroES system forms a nano-cage that allows encapsulation of the non-native substrate proteins and provides a physical environment optimized to promote and accelerate protein folding. GroES binds to the apical surface of the GroEL ring, thereby capping the opening of the GroEL channel. The sequence is that of Co-chaperonin GroES from Blochmanniella pennsylvanica (strain BPEN).